Reading from the N-terminus, the 553-residue chain is Mucolipin-3 (553 aa).

Topologically, residues 1-62 (MADPEVVVSS…FWARGRKPWK (62 aa)) are cytoplasmic. An interaction with phosphoinositides region spans residues 52 to 62 (KFWARGRKPWK). The chain crosses the membrane as a helical span at residues 63–83 (LAIQILKIAMVTIQLVLFGLS). Topologically, residues 84–283 (NQMVVAFKEE…VSGSIQKNTH (200 aa)) are extracellular. Residues 104–118 (KGYMDRMDDTYAVYT) are extracellular/lumenal pore loop. N-linked (GlcNAc...) asparagine glycosylation is found at asparagine 138, asparagine 172, and asparagine 205. An intrachain disulfide couples cysteine 159 to cysteine 185. An intrachain disulfide couples cysteine 238 to cysteine 269. The chain crosses the membrane as a helical span at residues 284–304 (YMMIFDAFVILTCLVSLILCI). Topologically, residues 305 to 341 (RSVIRGLQLQQEFVNFFLLHYKKEVSVSDQMEFVNGW) are cytoplasmic. A helical membrane pass occupies residues 342 to 362 (YIMIIISDILTIIGSILKMEI). Topologically, residues 363–371 (QAKSLTSYD) are extracellular. A helical membrane pass occupies residues 372 to 392 (VCSILLGTSTMLVWLGVIRYL). Over 393–414 (GFFAKYNLLILTLQAALPNVIR) the chain is Cytoplasmic. Residues 415–435 (FCCCAAMIYLGYCFCGWIVLG) form a helical membrane-spanning segment. The Extracellular portion of the chain corresponds to 436-443 (PYHDKFRS). The pore-forming intramembrane region spans 444 to 464 (LNMVSECLFSLINGDDMFATF). Positions 456 to 459 (NGDD) match the Selectivity filter motif. Over 465 to 475 (AKMQQKSYLVW) the chain is Extracellular. A helical transmembrane segment spans residues 476 to 497 (LFSRIYLYSFISLFIYMILSLF). Topologically, residues 498 to 553 (IALITDTYETIKQYQQDGFPETELRTFISECKDLPNSGKYRLEDDPPVSLFCCCKK) are cytoplasmic.

It belongs to the transient receptor (TC 1.A.4) family. Polycystin subfamily. MCOLN3 sub-subfamily. In terms of assembly, homotetramer. Can heterooligomerize with MCOLN1; heteromeric assemblies have different channel properties as compared to the respective homooligomers and may be tissue-specific. May heterooligomerize with TRPV5 to form a functional distinct ion channel. Interacts with GABARAPL2. N-glycosylated.

The protein resides in the cell membrane. It is found in the early endosome membrane. Its subcellular location is the late endosome membrane. The protein localises to the lysosome membrane. It localises to the cytoplasmic vesicle. The protein resides in the autophagosome membrane. It catalyses the reaction Ca(2+)(in) = Ca(2+)(out). The enzyme catalyses K(+)(in) = K(+)(out). The catalysed reaction is Na(+)(in) = Na(+)(out). With respect to regulation, channel activity is activated by PtdIns(3,5)P2 (phosphatidylinositol 3,5-bisphosphate). Inhibited by lumenal H(+) and Na(+). The channel pore shows dynamic behavior and undergoes spontaneous, Ca(2+)-dependent modulation when conducting Ca(2+). Nonselective cation channel probably playing a role in the regulation of membrane trafficking events. Acts as a Ca(2+)-permeable cation channel with inwardly rectifying activity. Mediates release of Ca(2+) from endosomes to the cytoplasm, contributes to endosomal acidification and is involved in the regulation of membrane trafficking and fusion in the endosomal pathway. Also permeable to Mg(2+), Na(+) and K(+). Does not seem to act as mechanosensory transduction channel in inner ear sensory hair cells. Proposed to play a critical role at the cochlear stereocilia ankle-link region during hair-bundle growth. Involved in the regulation of autophagy. Through association with GABARAPL2 may be involved in autophagosome formation possibly providing Ca(2+) for the fusion process. Through a possible and probably tissue-specific heteromerization with MCOLN1 may be at least in part involved in many lysosome-dependent cellular events. Possible heteromeric ion channel assemblies with TRPV5 show pharmacological similarity with TRPML3. The sequence is that of Mucolipin-3 (MCOLN3) from Homo sapiens (Human).